Consider the following 214-residue polypeptide: Large ribosomal subunit protein uL3 (214 aa).

Positions 131 to 155 (GAQRTSHGNSRSHRVPGSIGMAQDP) are disordered. Q153 is subject to N5-methylglutamine.

The protein belongs to the universal ribosomal protein uL3 family. As to quaternary structure, part of the 50S ribosomal subunit. Forms a cluster with proteins L14 and L19. Post-translationally, methylated by PrmB.

One of the primary rRNA binding proteins, it binds directly near the 3'-end of the 23S rRNA, where it nucleates assembly of the 50S subunit. This chain is Large ribosomal subunit protein uL3, found in Neisseria meningitidis serogroup C (strain 053442).